The sequence spans 457 residues: UDP-N-acetylmuramate--L-alanine ligase (457 aa).

109–115 (GTDGKTT) contacts ATP.

It belongs to the MurCDEF family.

It localises to the cytoplasm. It catalyses the reaction UDP-N-acetyl-alpha-D-muramate + L-alanine + ATP = UDP-N-acetyl-alpha-D-muramoyl-L-alanine + ADP + phosphate + H(+). It participates in cell wall biogenesis; peptidoglycan biosynthesis. Its function is as follows. Cell wall formation. This Thermotoga neapolitana (strain ATCC 49049 / DSM 4359 / NBRC 107923 / NS-E) protein is UDP-N-acetylmuramate--L-alanine ligase.